A 696-amino-acid chain; its full sequence is Polyribonucleotide nucleotidyltransferase (696 aa).

Mg(2+) contacts are provided by aspartate 483 and aspartate 489. The KH domain maps to 550-609; that stretch reads PRITTIYVKTDKIRDVIGSGGKNIRGITEATGVTIDIDDTGKINIASTDKAACDMAIKMI. The S1 motif domain occupies 619–687; that stretch reads GKLYMGLVKK…KQGKIKLSRK (69 aa).

This sequence belongs to the polyribonucleotide nucleotidyltransferase family. The cofactor is Mg(2+).

Its subcellular location is the cytoplasm. It catalyses the reaction RNA(n+1) + phosphate = RNA(n) + a ribonucleoside 5'-diphosphate. Involved in mRNA degradation. Catalyzes the phosphorolysis of single-stranded polyribonucleotides processively in the 3'- to 5'-direction. The polypeptide is Polyribonucleotide nucleotidyltransferase (Geotalea daltonii (strain DSM 22248 / JCM 15807 / FRC-32) (Geobacter daltonii)).